A 286-amino-acid polypeptide reads, in one-letter code: Phosphate import ATP-binding protein PstB (286 aa).

Residues 40 to 281 enclose the ABC transporter domain; sequence VVARDFSIYY…PKDSMTEDYI (242 aa). ATP is bound at residue 72–79; that stretch reads GPSGCGKS.

It belongs to the ABC transporter superfamily. Phosphate importer (TC 3.A.1.7) family. The complex is composed of two ATP-binding proteins (PstB), two transmembrane proteins (PstC and PstA) and a solute-binding protein (PstS).

It is found in the cell inner membrane. The catalysed reaction is phosphate(out) + ATP + H2O = ADP + 2 phosphate(in) + H(+). In terms of biological role, part of the ABC transporter complex PstSACB involved in phosphate import. Responsible for energy coupling to the transport system. The protein is Phosphate import ATP-binding protein PstB of Chlorobaculum tepidum (strain ATCC 49652 / DSM 12025 / NBRC 103806 / TLS) (Chlorobium tepidum).